The primary structure comprises 175 residues: Adenine phosphoribosyltransferase (175 aa).

It belongs to the purine/pyrimidine phosphoribosyltransferase family. As to quaternary structure, homodimer.

The protein localises to the cytoplasm. The enzyme catalyses AMP + diphosphate = 5-phospho-alpha-D-ribose 1-diphosphate + adenine. Its pathway is purine metabolism; AMP biosynthesis via salvage pathway; AMP from adenine: step 1/1. Functionally, catalyzes a salvage reaction resulting in the formation of AMP, that is energically less costly than de novo synthesis. The protein is Adenine phosphoribosyltransferase of Thermosipho melanesiensis (strain DSM 12029 / CIP 104789 / BI429).